A 53-amino-acid chain; its full sequence is UPF0391 membrane protein BamMC406_6344 (53 aa).

2 consecutive transmembrane segments (helical) span residues 5 to 25 (AIIF…GIAA) and 30 to 50 (IAKI…LLGV).

This sequence belongs to the UPF0391 family.

The protein localises to the cell membrane. The protein is UPF0391 membrane protein BamMC406_6344 of Burkholderia ambifaria (strain MC40-6).